Here is a 479-residue protein sequence, read N- to C-terminus: Poly(A) polymerase catalytic subunit (479 aa).

Catalysis depends on residues Asp202 and Asp204. Asp202, Asp204, and Asp253 together coordinate Ca(2+).

It belongs to the poxviridae poly(A) polymerase catalytic subunit family. Heterodimer of a large (catalytic) subunit and a small (regulatory) subunit.

It carries out the reaction RNA(n) + ATP = RNA(n)-3'-adenine ribonucleotide + diphosphate. In terms of biological role, polymerase that creates the 3'-poly(A) tail of mRNA's. This is Poly(A) polymerase catalytic subunit (OPG063) from Bos taurus (Bovine).